Consider the following 382-residue polypeptide: Ribosomal RNA large subunit methyltransferase G (382 aa).

This sequence belongs to the methyltransferase superfamily. RlmG family.

It localises to the cytoplasm. It catalyses the reaction guanosine(1835) in 23S rRNA + S-adenosyl-L-methionine = N(2)-methylguanosine(1835) in 23S rRNA + S-adenosyl-L-homocysteine + H(+). In terms of biological role, specifically methylates the guanine in position 1835 (m2G1835) of 23S rRNA. This is Ribosomal RNA large subunit methyltransferase G from Pseudoalteromonas translucida (strain TAC 125).